Consider the following 403-residue polypeptide: Ribosomal RNA large subunit methyltransferase I (403 aa).

Positions 9–88 constitute a PUA domain; the sequence is YPRLVLSKGR…ESIDIAFFTR (80 aa).

It belongs to the methyltransferase superfamily. RlmI family.

It localises to the cytoplasm. It carries out the reaction cytidine(1962) in 23S rRNA + S-adenosyl-L-methionine = 5-methylcytidine(1962) in 23S rRNA + S-adenosyl-L-homocysteine + H(+). Specifically methylates the cytosine at position 1962 (m5C1962) of 23S rRNA. This is Ribosomal RNA large subunit methyltransferase I from Salmonella typhi.